Reading from the N-terminus, the 575-residue chain is E3 ubiquitin-protein ligase IpaH1.4 (575 aa).

The tract at residues Met-1–Phe-270 is interaction with target proteins. LRR repeat units follow at residues Leu-69 to Pro-90, Pro-91 to Val-115, His-117 to Pro-130, Glu-131 to Pro-150, Glu-151 to Pro-170, Pro-171 to Gly-195, Ala-197 to Leu-209, and Pro-210 to Leu-233. The segment at Ser-271 to Pro-281 is linker. Residues Glu-282 to Ala-575 form an E3 ubiquitin-protein ligase catalytic domain region. One can recognise an NEL domain in the interval Ser-284 to Ala-575. The active-site Glycyl thioester intermediate is Cys-368.

This sequence belongs to the LRR-containing bacterial E3 ligase family. As to quaternary structure, interacts with human RBCK1/HOIL-1 and RNF31/HOIP components of the LUBAC complex. In terms of processing, ubiquitinated in the presence of host E1 ubiquitin-activating enzyme, E2 ubiquitin-conjugating enzyme and ubiquitin.

The protein resides in the secreted. The protein localises to the host cytoplasm. The catalysed reaction is S-ubiquitinyl-[E2 ubiquitin-conjugating enzyme]-L-cysteine + [acceptor protein]-L-lysine = [E2 ubiquitin-conjugating enzyme]-L-cysteine + N(6)-ubiquitinyl-[acceptor protein]-L-lysine.. Its pathway is protein modification; protein ubiquitination. Exists in an autoinhibited state in the absence of substrate protein, probably due to interactions of the leucine-rich repeat domain with the catalytic domain. Is activated upon binding to a substrate protein. Its function is as follows. E3 ubiquitin-protein ligase effector that inhibits host cell innate immunity during bacterial infection by catalyzing 'Lys-48'-linked polyubiquitination and subsequent degradation of host RNF31/HOIP and RBCK1/HOIL-1. Host RNF31/HOIP is the catalytic component of the LUBAC complex, which conjugates linear ('Met-1'-linked) polyubiquitin chains at the surface of bacteria invading the host cytosol to form the ubiquitin coat surrounding bacteria. The bacterial ubiquitin coat acts as an 'eat-me' signal for xenophagy and promotes NF-kappa-B activation. By promoting degradation of host RNF31/HOIP, IpaH1.4 prevents formation of the bacterial ubiquitin coat and activation of host cell innate immunity. This Shigella flexneri protein is E3 ubiquitin-protein ligase IpaH1.4.